The chain runs to 299 residues: Ribosomal protein L11 methyltransferase (299 aa).

The S-adenosyl-L-methionine site is built by threonine 144, glycine 165, aspartate 187, and asparagine 229.

This sequence belongs to the methyltransferase superfamily. PrmA family.

Its subcellular location is the cytoplasm. The enzyme catalyses L-lysyl-[protein] + 3 S-adenosyl-L-methionine = N(6),N(6),N(6)-trimethyl-L-lysyl-[protein] + 3 S-adenosyl-L-homocysteine + 3 H(+). Functionally, methylates ribosomal protein L11. The polypeptide is Ribosomal protein L11 methyltransferase (Teredinibacter turnerae (strain ATCC 39867 / T7901)).